The following is a 221-amino-acid chain: uncharacterized protein (221 aa).

This is an uncharacterized protein from Archaeoglobus fulgidus (strain ATCC 49558 / DSM 4304 / JCM 9628 / NBRC 100126 / VC-16).